Reading from the N-terminus, the 459-residue chain is uncharacterized protein (459 aa).

A TRAM domain is found at 9–67; the sequence is KLEVGQTFPVTIKRLGINGEGVGYFKRQVVFIPGALPGEEVVAETTKIQRGFAEAKVKK. Residues Cys-80, Cys-86, Cys-89, and Cys-168 each contribute to the [4Fe-4S] cluster site. Gln-292, Tyr-321, Asp-342, and Asp-390 together coordinate S-adenosyl-L-methionine. Cys-417 serves as the catalytic Nucleophile.

Belongs to the class I-like SAM-binding methyltransferase superfamily. RNA M5U methyltransferase family.

This is an uncharacterized protein from Bacillus anthracis.